We begin with the raw amino-acid sequence, 456 residues long: Adenylosuccinate lyase (456 aa).

Residues 15 to 16 (RY), 90 to 92 (NHD), and 122 to 123 (TS) contribute to the N(6)-(1,2-dicarboxyethyl)-AMP site. The active-site Proton donor/acceptor is the His171. Position 247 (Gln247) interacts with N(6)-(1,2-dicarboxyethyl)-AMP. The active-site Proton donor/acceptor is the Ser295. N(6)-(1,2-dicarboxyethyl)-AMP contacts are provided by residues Ser296, 301 to 303 (KIN), Asn309, Arg335, and 340 to 344 (STVLR).

It belongs to the lyase 1 family. Adenylosuccinate lyase subfamily. Homotetramer. Residues from neighboring subunits contribute catalytic and substrate-binding residues to each active site.

It carries out the reaction N(6)-(1,2-dicarboxyethyl)-AMP = fumarate + AMP. It catalyses the reaction (2S)-2-[5-amino-1-(5-phospho-beta-D-ribosyl)imidazole-4-carboxamido]succinate = 5-amino-1-(5-phospho-beta-D-ribosyl)imidazole-4-carboxamide + fumarate. The protein operates within purine metabolism; AMP biosynthesis via de novo pathway; AMP from IMP: step 2/2. It functions in the pathway purine metabolism; IMP biosynthesis via de novo pathway; 5-amino-1-(5-phospho-D-ribosyl)imidazole-4-carboxamide from 5-amino-1-(5-phospho-D-ribosyl)imidazole-4-carboxylate: step 2/2. Catalyzes two reactions in de novo purine nucleotide biosynthesis. Catalyzes the breakdown of 5-aminoimidazole- (N-succinylocarboxamide) ribotide (SAICAR or 2-[5-amino-1-(5-phospho-beta-D-ribosyl)imidazole-4-carboxamido]succinate) to 5-aminoimidazole-4-carboxamide ribotide (AICAR or 5-amino-1-(5-phospho-beta-D-ribosyl)imidazole-4-carboxamide) and fumarate, and of adenylosuccinate (ADS or N(6)-(1,2-dicarboxyethyl)-AMP) to adenosine monophosphate (AMP) and fumarate. The protein is Adenylosuccinate lyase (purB) of Buchnera aphidicola subsp. Schizaphis graminum (strain Sg).